Here is a 432-residue protein sequence, read N- to C-terminus: ATP-dependent RNA helicase RhlB (432 aa).

Positions 9-37 (QNFADLGLQPQVIDGLNAKGFIKCTPIQA) match the Q motif motif. The 180-residue stretch at 40–219 (LPVLLAGQDI…FEHMQEPEHV (180 aa)) folds into the Helicase ATP-binding domain. Position 53–60 (53–60 (AQTGTGKT)) interacts with ATP. The short motif at 165-168 (DEAD) is the DEAD box element. Positions 245 to 390 (ALLQTLIEEE…QSDYDASALL (146 aa)) constitute a Helicase C-terminal domain. Residues 397 to 432 (LRLQRRPQQNRRNNNGQRQGGNRKHSRPRQPRNTQS) form a disordered region. Positions 417–426 (GNRKHSRPRQ) are enriched in basic residues.

It belongs to the DEAD box helicase family. RhlB subfamily. As to quaternary structure, component of the RNA degradosome, which is a multiprotein complex involved in RNA processing and mRNA degradation.

The protein localises to the cytoplasm. The catalysed reaction is ATP + H2O = ADP + phosphate + H(+). DEAD-box RNA helicase involved in RNA degradation. Has RNA-dependent ATPase activity and unwinds double-stranded RNA. This Aliivibrio fischeri (strain MJ11) (Vibrio fischeri) protein is ATP-dependent RNA helicase RhlB.